The following is a 332-amino-acid chain: UPF0194 membrane protein YbhG (332 aa).

The signal sequence occupies residues 1–16 (MMKKPVVIGLAVVVLA). The stretch at 108–209 (EEIAQAAAAV…LNLQDSTLIA (102 aa)) forms a coiled coil.

It belongs to the UPF0194 family.

It is found in the periplasm. This Escherichia coli O45:K1 (strain S88 / ExPEC) protein is UPF0194 membrane protein YbhG.